A 130-amino-acid chain; its full sequence is S-adenosylmethionine decarboxylase proenzyme (130 aa).

S64 serves as the catalytic Schiff-base intermediate with substrate; via pyruvic acid. Residue S64 is modified to Pyruvic acid (Ser); by autocatalysis. H69 (proton acceptor; for processing activity) is an active-site residue. C84 (proton donor; for catalytic activity) is an active-site residue.

This sequence belongs to the prokaryotic AdoMetDC family. Type 1 subfamily. As to quaternary structure, heterotetramer of two alpha and two beta chains arranged as a dimer of alpha/beta heterodimers. Requires pyruvate as cofactor. In terms of processing, is synthesized initially as an inactive proenzyme. Formation of the active enzyme involves a self-maturation process in which the active site pyruvoyl group is generated from an internal serine residue via an autocatalytic post-translational modification. Two non-identical subunits are generated from the proenzyme in this reaction, and the pyruvate is formed at the N-terminus of the alpha chain, which is derived from the carboxyl end of the proenzyme. The post-translation cleavage follows an unusual pathway, termed non-hydrolytic serinolysis, in which the side chain hydroxyl group of the serine supplies its oxygen atom to form the C-terminus of the beta chain, while the remainder of the serine residue undergoes an oxidative deamination to produce ammonia and the pyruvoyl group blocking the N-terminus of the alpha chain.

The catalysed reaction is S-adenosyl-L-methionine + H(+) = S-adenosyl 3-(methylsulfanyl)propylamine + CO2. Its pathway is amine and polyamine biosynthesis; S-adenosylmethioninamine biosynthesis; S-adenosylmethioninamine from S-adenosyl-L-methionine: step 1/1. Functionally, catalyzes the decarboxylation of S-adenosylmethionine to S-adenosylmethioninamine (dcAdoMet), the propylamine donor required for the synthesis of the polyamines spermine and spermidine from the diamine putrescine. This chain is S-adenosylmethionine decarboxylase proenzyme, found in Picrophilus torridus (strain ATCC 700027 / DSM 9790 / JCM 10055 / NBRC 100828 / KAW 2/3).